Here is a 469-residue protein sequence, read N- to C-terminus: uncharacterized protein (469 aa).

2 disordered regions span residues 248 to 314 and 327 to 418; these read RDDN…EPES and QMDQ…PRPT. Polar residues-rich tracts occupy residues 292 to 305 and 350 to 365; these read ESSN…NAAS and TARQ…PNTV. Low complexity predominate over residues 366–377; it reads TATSASTPASTS.

This is an uncharacterized protein from Cryphonectria parasitica (Chestnut blight fungus).